A 178-amino-acid polypeptide reads, in one-letter code: Ribulose bisphosphate carboxylase small subunit, chloroplastic 4 (178 aa).

Residues 1-54 (MASISSTVATVSRAAPAQANMVAPFTGLKSNAAFPATKKANDFSTLPSNGGRVQ) constitute a chloroplast transit peptide.

Belongs to the RuBisCO small chain family. Heterohexadecamer of 8 large and 8 small subunits.

Its subcellular location is the plastid. It is found in the chloroplast. Its function is as follows. RuBisCO catalyzes two reactions: the carboxylation of D-ribulose 1,5-bisphosphate, the primary event in carbon dioxide fixation, as well as the oxidative fragmentation of the pentose substrate. Both reactions occur simultaneously and in competition at the same active site. Although the small subunit is not catalytic it is essential for maximal activity. This chain is Ribulose bisphosphate carboxylase small subunit, chloroplastic 4, found in Flaveria pringlei.